We begin with the raw amino-acid sequence, 351 residues long: D-alanine--D-alanine ligase (351 aa).

The 209-residue stretch at 135-343 (NQIFLQSGQK…MEEVFADLIE (209 aa)) folds into the ATP-grasp domain. Position 167–222 (167–222 (LMSLGFPQFLKPVEGGSSVSTYKITNQEQLSRQLALIFESDSKVMSQSFLAGTEVS)) interacts with ATP. Residues aspartate 298, glutamate 310, and asparagine 312 each coordinate Mg(2+).

It belongs to the D-alanine--D-alanine ligase family. Mg(2+) is required as a cofactor. The cofactor is Mn(2+).

It localises to the cytoplasm. The catalysed reaction is 2 D-alanine + ATP = D-alanyl-D-alanine + ADP + phosphate + H(+). It functions in the pathway cell wall biogenesis; peptidoglycan biosynthesis. Its function is as follows. Cell wall formation. This Leptospira borgpetersenii serovar Hardjo-bovis (strain JB197) protein is D-alanine--D-alanine ligase.